A 514-amino-acid polypeptide reads, in one-letter code: ATP synthase subunit alpha (514 aa).

ATP is bound at residue 170–177 (GDRQIGKT).

The protein belongs to the ATPase alpha/beta chains family. F-type ATPases have 2 components, CF(1) - the catalytic core - and CF(0) - the membrane proton channel. CF(1) has five subunits: alpha(3), beta(3), gamma(1), delta(1), epsilon(1). CF(0) has three main subunits: a(1), b(2) and c(9-12). The alpha and beta chains form an alternating ring which encloses part of the gamma chain. CF(1) is attached to CF(0) by a central stalk formed by the gamma and epsilon chains, while a peripheral stalk is formed by the delta and b chains.

It localises to the cell inner membrane. It carries out the reaction ATP + H2O + 4 H(+)(in) = ADP + phosphate + 5 H(+)(out). Its function is as follows. Produces ATP from ADP in the presence of a proton gradient across the membrane. The alpha chain is a regulatory subunit. This is ATP synthase subunit alpha from Pseudomonas fluorescens (strain Pf0-1).